Here is a 142-residue protein sequence, read N- to C-terminus: MSSSIVLSNNNSNSNSMSMIGQSPPCCSDVPNTPASEEMTRMVKNVVASWEWVPLGKDKVGIIIPADQDHRQVHKSRFVDLLEFCDETMKVKEVIAVFGRADLTVAAGFPRTLRYVGFRVVAPENFPPTLDATTHFAMTYVV.

Residues 1–19 (MSSSIVLSNNNSNSNSMSM) are compositionally biased toward low complexity. Residues 1–34 (MSSSIVLSNNNSNSNSMSMIGQSPPCCSDVPNTP) are disordered.

It belongs to the ODC antizyme family. In terms of assembly, interacts with ODC1 and thereby sterically blocks ODC homodimerization.

Ornithine decarboxylase (ODC) antizyme protein that negatively regulates ODC activity and intracellular polyamine biosynthesis and uptake in response to increased intracellular polyamine levels. Binds to ODC monomers, inhibiting the assembly of the functional ODC homodimer, and targets the monomers for ubiquitin-independent proteolytic destruction by the 26S proteasome. The chain is Ornithine decarboxylase antizyme from Pristionchus pacificus (Parasitic nematode).